The sequence spans 467 residues: Hydroxyacid-oxoacid transhydrogenase, mitochondrial (467 aa).

At Lys445 the chain carries N6-acetyllysine. A Phosphoserine modification is found at Ser452.

This sequence belongs to the iron-containing alcohol dehydrogenase family. Hydroxyacid-oxoacid transhydrogenase subfamily. As to expression, expressed in kidney and liver.

It localises to the mitochondrion. It catalyses the reaction (S)-3-hydroxybutanoate + 2-oxoglutarate = (R)-2-hydroxyglutarate + acetoacetate. The enzyme catalyses 4-hydroxybutanoate + 2-oxoglutarate = (R)-2-hydroxyglutarate + succinate semialdehyde. Functionally, catalyzes the cofactor-independent reversible oxidation of gamma-hydroxybutyrate (GHB) to succinic semialdehyde (SSA) coupled to reduction of 2-ketoglutarate (2-KG) to D-2-hydroxyglutarate (D-2-HG). L-3-hydroxybutyrate (L-3-OHB) is also a substrate for HOT when using 2-KG as hydrogen acceptor, resulting in the formation of D-2-HG. The sequence is that of Hydroxyacid-oxoacid transhydrogenase, mitochondrial (Adhfe1) from Rattus norvegicus (Rat).